The primary structure comprises 248 residues: Ribosomal RNA small subunit methyltransferase J (248 aa).

Residues 101 to 102 (RD), 117 to 118 (ER), 153 to 154 (SS), and Asp171 each bind S-adenosyl-L-methionine.

It belongs to the methyltransferase superfamily. RsmJ family.

It localises to the cytoplasm. It catalyses the reaction guanosine(1516) in 16S rRNA + S-adenosyl-L-methionine = N(2)-methylguanosine(1516) in 16S rRNA + S-adenosyl-L-homocysteine + H(+). Its function is as follows. Specifically methylates the guanosine in position 1516 of 16S rRNA. The sequence is that of Ribosomal RNA small subunit methyltransferase J from Pectobacterium atrosepticum (strain SCRI 1043 / ATCC BAA-672) (Erwinia carotovora subsp. atroseptica).